The chain runs to 542 residues: CTP synthase (542 aa).

The tract at residues 1 to 266 is amidoligase domain; it reads MATNYIFVTG…DEFVCNRFHL (266 aa). Ser-14 contacts CTP. Ser-14 serves as a coordination point for UTP. Residues 15 to 20 and Asp-72 each bind ATP; that span reads SLGKGI. Mg(2+) contacts are provided by Asp-72 and Glu-140. CTP is bound by residues 147-149, 187-192, and Lys-223; these read DIE and KTKPTQ. Residues 187–192 and Lys-223 each bind UTP; that span reads KTKPTQ. ATP is bound at residue 239 to 241; sequence KDV. In terms of domain architecture, Glutamine amidotransferase type-1 spans 291-542; sequence TIGMVGKYVE…VKAAKENQKK (252 aa). Position 352 (Gly-352) interacts with L-glutamine. The active-site Nucleophile; for glutamine hydrolysis is the Cys-379. L-glutamine-binding positions include 380–383, Glu-403, and Arg-470; that span reads LGMQ. Active-site residues include His-515 and Glu-517.

This sequence belongs to the CTP synthase family. Homotetramer.

It carries out the reaction UTP + L-glutamine + ATP + H2O = CTP + L-glutamate + ADP + phosphate + 2 H(+). The enzyme catalyses L-glutamine + H2O = L-glutamate + NH4(+). It catalyses the reaction UTP + NH4(+) + ATP = CTP + ADP + phosphate + 2 H(+). Its pathway is pyrimidine metabolism; CTP biosynthesis via de novo pathway; CTP from UDP: step 2/2. Its activity is regulated as follows. Allosterically activated by GTP, when glutamine is the substrate; GTP has no effect on the reaction when ammonia is the substrate. The allosteric effector GTP functions by stabilizing the protein conformation that binds the tetrahedral intermediate(s) formed during glutamine hydrolysis. Inhibited by the product CTP, via allosteric rather than competitive inhibition. Its function is as follows. Catalyzes the ATP-dependent amination of UTP to CTP with either L-glutamine or ammonia as the source of nitrogen. Regulates intracellular CTP levels through interactions with the four ribonucleotide triphosphates. The sequence is that of CTP synthase from Actinobacillus succinogenes (strain ATCC 55618 / DSM 22257 / CCUG 43843 / 130Z).